The chain runs to 260 residues: Ribose-5-phosphate isomerase (260 aa).

Belongs to the ribose 5-phosphate isomerase family.

It is found in the cytoplasm. The catalysed reaction is aldehydo-D-ribose 5-phosphate = D-ribulose 5-phosphate. The protein operates within carbohydrate degradation; pentose phosphate pathway; D-ribose 5-phosphate from D-ribulose 5-phosphate (non-oxidative stage): step 1/1. The protein is Ribose-5-phosphate isomerase (RKI1) of Candida glabrata (strain ATCC 2001 / BCRC 20586 / JCM 3761 / NBRC 0622 / NRRL Y-65 / CBS 138) (Yeast).